Here is a 504-residue protein sequence, read N- to C-terminus: Ribonuclease Y (504 aa).

Residues 2 to 22 (TTSIVIGVVLVTVGLTFGWTI) traverse the membrane as a helical segment. Residues 194–279 (TVSTVNLPSE…EIVQKVTQEV (86 aa)) enclose the KH domain. The region spanning 320–413 (VLYHSKEVAL…VQVADAISAA (94 aa)) is the HD domain.

This sequence belongs to the RNase Y family.

The protein localises to the cell membrane. Endoribonuclease that initiates mRNA decay. In Treponema pallidum (strain Nichols), this protein is Ribonuclease Y.